The following is a 324-amino-acid chain: DNA-directed RNA polymerase subunit alpha (324 aa).

The alpha N-terminal domain (alpha-NTD) stretch occupies residues 1 to 228 (MIEFQKPTIR…EHFNLFTDLS (228 aa)). The alpha C-terminal domain (alpha-CTD) stretch occupies residues 245-324 (RNKLLDMTIE…STPKEEEEEK (80 aa)).

This sequence belongs to the RNA polymerase alpha chain family. Homodimer. The RNAP catalytic core consists of 2 alpha, 1 beta, 1 beta' and 1 omega subunit. When a sigma factor is associated with the core the holoenzyme is formed, which can initiate transcription.

The enzyme catalyses RNA(n) + a ribonucleoside 5'-triphosphate = RNA(n+1) + diphosphate. In terms of biological role, DNA-dependent RNA polymerase catalyzes the transcription of DNA into RNA using the four ribonucleoside triphosphates as substrates. This chain is DNA-directed RNA polymerase subunit alpha, found in Caldicellulosiruptor bescii (strain ATCC BAA-1888 / DSM 6725 / KCTC 15123 / Z-1320) (Anaerocellum thermophilum).